The following is a 206-amino-acid chain: MAAVAEREVLGMVAAVAAMVVMMAPPAAALVPYGYGYMLDDPFRVLEQSPLRPAGGVAAAAAAGEPAAVALARCDWKETPEAHVVTVDVPGVRRGDVRVEVDEASRVLRVSGERRRAGAAEEEEGERDGVRWHRAERAAGRFWRRFRMPPGADVGRVAARLDDGVLTVTVPKVPGHRGREPRVVAIDGAGAGDMEAEVVKASKAEM.

An N-terminal signal peptide occupies residues 1-29 (MAAVAEREVLGMVAAVAAMVVMMAPPAAA). The region spanning 65–187 (EPAAVALARC…GREPRVVAID (123 aa)) is the sHSP domain. Residues 94-96 (RGD) carry the Cell attachment site motif.

This sequence belongs to the small heat shock protein (HSP20) family. May form oligomeric structures.

It localises to the endoplasmic reticulum. The protein is 21.9 kDa heat shock protein (HSP21.9) of Oryza sativa subsp. japonica (Rice).